A 643-amino-acid polypeptide reads, in one-letter code: Protein disulfide-isomerase A4 (643 aa).

An N-terminal signal peptide occupies residues 1 to 20 (MKLRKAWLLVLLLALTQLLA). 2 consecutive Thioredoxin domains span residues 21-167 (AASA…EVSQ) and 167-299 (QPDW…EFLK). Residues 24-58 (AEDAHEDASDSENPIEDDDDEEEDEEDEDDLEVKE) are disordered. Residues 32-56 (SDSENPIEDDDDEEEDEEDEDDLEV) show a composition bias toward acidic residues. Positions 89 to 92 (CGHC) match the CXXC motif. Disulfide bonds link cysteine 89/cysteine 92 and cysteine 204/cysteine 207. An N6-acetyllysine modification is found at lysine 364. Residues 503-634 (FKKGKLKPVI…LSKFIDEHAT (132 aa)) enclose the Thioredoxin 3 domain. Residues 553-556 (CGHC) carry the CXXC motif. A disulfide bridge connects residues cysteine 553 and cysteine 556. Positions 640–643 (KEEL) match the Prevents secretion from ER motif.

Belongs to the protein disulfide isomerase family. As to quaternary structure, part of a large chaperone multiprotein complex comprising DNAJB11, HSP90B1, HSPA5, HYOU, PDIA2, PDIA4, PDIA6, PPIB, SDF2L1, UGGT1 and very small amounts of ERP29, but not, or at very low levels, CALR nor CANX. Component of a complex containing at least CRELD2, MANF, MATN3 and PDIA4. In terms of processing, O-glycosylated.

The protein resides in the endoplasmic reticulum lumen. It localises to the melanosome. It catalyses the reaction Catalyzes the rearrangement of -S-S- bonds in proteins.. In Rattus norvegicus (Rat), this protein is Protein disulfide-isomerase A4 (Pdia4).